Consider the following 528-residue polypeptide: MSLPVVLIADKLAPSTVAALGDQVEVRWVDGPDRDKLLAAVPEADALLVRSATTVDAEVLAAAPKLKIVARAGVGLDNVDVDAATARGVLVVNAPTSNIHSAAEHALALLLAASRQIPAADASLREHTWKRSSFSGTEIFGKTVGVVGLGRIGQLVAQRIAAFGAYVVAYDPYVSPARAAQLGIELLSLDDLLARADFISVHLPKTPETAGLIDKEALAKTKPGVIIVNAARGGLVDEAALADAITGGHVRAAGLDVFATEPCTDSPLFELAQVVVTPHLGASTAEAQDRAGTDVAESVRLALAGEFVPDAVNVGGGVVNEEVAPWLDLVRKLGVLAGVLSDELPVSLSVQVRGELAAEEVEVLRLSALRGLFSAVIEDAVTFVNAPALAAERGVTAEICKASESPNHRSVVDVRAVGADGSVVTVSGTLYGPQLSQKIVQINGRHFDLRAQGINLIIHYVDRPGALGKIGTLLGTAGVNIQAAQLSEDAEGPGATILLRLDQDVPDDVRTAIAAAVDAYKLEVVDLS.

NAD(+) contacts are provided by residues 151–152, aspartate 171, 230–232, and aspartate 256; these read RI and AAR. Arginine 232 is an active-site residue. Residue glutamate 261 is part of the active site. Histidine 279 functions as the Proton donor in the catalytic mechanism. 279-282 is a binding site for NAD(+); that stretch reads HLGA. The region spanning 455–527 is the ACT domain; that stretch reads NLIIHYVDRP…DAYKLEVVDL (73 aa).

Belongs to the D-isomer specific 2-hydroxyacid dehydrogenase family.

It carries out the reaction (2R)-3-phosphoglycerate + NAD(+) = 3-phosphooxypyruvate + NADH + H(+). The catalysed reaction is (R)-2-hydroxyglutarate + NAD(+) = 2-oxoglutarate + NADH + H(+). It participates in amino-acid biosynthesis; L-serine biosynthesis; L-serine from 3-phospho-D-glycerate: step 1/3. Functionally, catalyzes the reversible oxidation of 3-phospho-D-glycerate to 3-phosphonooxypyruvate, the first step of the phosphorylated L-serine biosynthesis pathway. Also catalyzes the reversible oxidation of 2-hydroxyglutarate to 2-oxoglutarate. The protein is D-3-phosphoglycerate dehydrogenase (serA) of Mycobacterium bovis (strain ATCC BAA-935 / AF2122/97).